The sequence spans 344 residues: MDFLVLFLFYLASVLMGLVLICVCSKTHSLKGLARGGAQIFSCIIPECLQRAVHGLLHYLFHTRNHTFIVLHLVLQGMVYTEYTWEVFGYCQELELSLHYLLLPYLLLGVNLFFFTLTCGTNPGIITKANELLFLHVYEFDEVMFPKNVRCSTCDLRKPARSKHCSVCNWCVHRFDHHCVWVNNCIGAWNIRYFLIYVLTLTASAATVAIVSTTFLVHLVVMSDLYQETYIDDLGHLHVMDTVFLIQYLFLTFPRIVFMLGFVVVLSFLLGGYLLFVLYLAATNQTTNEWYRGDWAWCQRCPLVAWPPSAEPQVHRNIHSHGLRSNLQEIFLPAFPCHERKKQE.

Residues 1 to 2 (MD) are Lumenal-facing. A helical transmembrane segment spans residues 3–23 (FLVLFLFYLASVLMGLVLICV). Topologically, residues 24-67 (CSKTHSLKGLARGGAQIFSCIIPECLQRAVHGLLHYLFHTRNHT) are cytoplasmic. The helical transmembrane segment at 68–88 (FIVLHLVLQGMVYTEYTWEVF) threads the bilayer. Residues 89-99 (GYCQELELSLH) are Lumenal-facing. The chain crosses the membrane as a helical span at residues 100–120 (YLLLPYLLLGVNLFFFTLTCG). The Cytoplasmic portion of the chain corresponds to 121–192 (TNPGIITKAN…NNCIGAWNIR (72 aa)). Positions 149–199 (VRCSTCDLRKPARSKHCSVCNWCVHRFDHHCVWVNNCIGAWNIRYFLIYVL) constitute a DHHC domain. Cysteine 179 functions as the S-palmitoyl cysteine intermediate in the catalytic mechanism. Residues 193–213 (YFLIYVLTLTASAATVAIVST) form a helical membrane-spanning segment. Residues 214 to 255 (TFLVHLVVMSDLYQETYIDDLGHLHVMDTVFLIQYLFLTFPR) are Lumenal-facing. Residues 256–276 (IVFMLGFVVVLSFLLGGYLLF) traverse the membrane as a helical segment. The Cytoplasmic segment spans residues 277-344 (VLYLAATNQT…FPCHERKKQE (68 aa)). A Di-lysine motif motif is present at residues 341-344 (KKQE).

It belongs to the DHHC palmitoyltransferase family. In terms of assembly, interacts with CPT1A.

It is found in the endoplasmic reticulum membrane. It localises to the golgi apparatus membrane. The protein resides in the cell membrane. The enzyme catalyses L-cysteinyl-[protein] + hexadecanoyl-CoA = S-hexadecanoyl-L-cysteinyl-[protein] + CoA. In terms of biological role, palmitoyltransferase that catalyzes the addition of palmitate onto protein substrates including the D(2) dopamine receptor DRD2, GSK3B or MAVS. Mediates GSK3B palmitoylation to prevent its AKT1-mediated phosphorylation leading to activation of the STAT3 signaling pathway. Also catalyzes MAVS palmitoylation which promotes its stabilization and activation by inhibiting 'Lys-48'- but facilitating 'Lys-63'-linked ubiquitination. In Homo sapiens (Human), this protein is Palmitoyltransferase ZDHHC4.